The following is a 520-amino-acid chain: Ribonuclease Y (520 aa).

A helical transmembrane segment spans residues 4–24 (TVWILISILLATVGAVVGFFV). Residues 210 to 273 (TVSVVNLPND…ETARIALDKL (64 aa)) enclose the KH domain. The HD domain occupies 336–429 (VLKHSMEVAY…VAAADALSAA (94 aa)).

It belongs to the RNase Y family.

The protein localises to the cell membrane. Its function is as follows. Endoribonuclease that initiates mRNA decay. In Bacillus cereus (strain ZK / E33L), this protein is Ribonuclease Y.